A 210-amino-acid chain; its full sequence is Pyridoxine/pyridoxamine 5'-phosphate oxidase (210 aa).

Residues 7–10 (REDY) and K65 each bind substrate. FMN is bound by residues 60 to 65 (RMVLLK), 75 to 76 (FT), R81, K82, and Q104. 3 residues coordinate substrate: Y122, R126, and S130. Residues 139–140 (QS) and W183 each bind FMN. A substrate-binding site is contributed by 189–191 (RLH). Residue R193 participates in FMN binding.

It belongs to the pyridoxamine 5'-phosphate oxidase family. In terms of assembly, homodimer. FMN serves as cofactor.

The enzyme catalyses pyridoxamine 5'-phosphate + O2 + H2O = pyridoxal 5'-phosphate + H2O2 + NH4(+). It carries out the reaction pyridoxine 5'-phosphate + O2 = pyridoxal 5'-phosphate + H2O2. It functions in the pathway cofactor metabolism; pyridoxal 5'-phosphate salvage; pyridoxal 5'-phosphate from pyridoxamine 5'-phosphate: step 1/1. It participates in cofactor metabolism; pyridoxal 5'-phosphate salvage; pyridoxal 5'-phosphate from pyridoxine 5'-phosphate: step 1/1. In terms of biological role, catalyzes the oxidation of either pyridoxine 5'-phosphate (PNP) or pyridoxamine 5'-phosphate (PMP) into pyridoxal 5'-phosphate (PLP). This Neisseria meningitidis serogroup A / serotype 4A (strain DSM 15465 / Z2491) protein is Pyridoxine/pyridoxamine 5'-phosphate oxidase.